We begin with the raw amino-acid sequence, 347 residues long: Elongation factor Ts (347 aa).

Residues 80 to 83 form an involved in Mg(2+) ion dislocation from EF-Tu region; that stretch reads TDFV.

The protein belongs to the EF-Ts family.

Its subcellular location is the cytoplasm. Its function is as follows. Associates with the EF-Tu.GDP complex and induces the exchange of GDP to GTP. It remains bound to the aminoacyl-tRNA.EF-Tu.GTP complex up to the GTP hydrolysis stage on the ribosome. The chain is Elongation factor Ts from Streptococcus gordonii (strain Challis / ATCC 35105 / BCRC 15272 / CH1 / DL1 / V288).